We begin with the raw amino-acid sequence, 184 residues long: Ribosome maturation factor RimM (184 aa).

The PRC barrel domain maps to 106–184; the sequence is PGDYYWYQLE…RMIVDWDPEF (79 aa).

This sequence belongs to the RimM family. As to quaternary structure, binds ribosomal protein uS19.

The protein localises to the cytoplasm. Functionally, an accessory protein needed during the final step in the assembly of 30S ribosomal subunit, possibly for assembly of the head region. Essential for efficient processing of 16S rRNA. May be needed both before and after RbfA during the maturation of 16S rRNA. It has affinity for free ribosomal 30S subunits but not for 70S ribosomes. This chain is Ribosome maturation factor RimM, found in Chromohalobacter salexigens (strain ATCC BAA-138 / DSM 3043 / CIP 106854 / NCIMB 13768 / 1H11).